The following is a 106-amino-acid chain: Oncosphere antigen B (106 aa).

Positions 11-106 constitute a Fibronectin type-III domain; sequence LPQHFRWSQV…QSELRSMCIK (96 aa).

This chain is Oncosphere antigen B (ONCB), found in Hydatigena taeniaeformis (Feline tapeworm).